A 1480-amino-acid polypeptide reads, in one-letter code: Nonribosomal peptide synthetase inpA (1480 aa).

The span at 1–17 shows a compositional bias: low complexity; that stretch reads MSHSMSSSSSSSSSSSS. The tract at residues 1-24 is disordered; sequence MSHSMSSSSSSSSSSSSSRDEGQS. The segment at 44-458 is condensation; that stretch reads VQDVYPCTPL…QLISPQDLDQ (415 aa). Residues 479-871 form an adenylation region; sequence QRHIDTRPDA…GRKDSQVKIR (393 aa). One can recognise a Carrier domain in the interval 1003–1082; that stretch reads DSTNKVALRL…GLAAMITSPH (80 aa). An O-(pantetheine 4'-phosphoryl)serine modification is found at Ser1041. Residues 1117–1436 form a thioesterase (TE) domain region; sequence KVFLTGATGL…VLAMLQDPQM (320 aa).

Belongs to the NRP synthetase family.

It participates in secondary metabolite biosynthesis. Nonribosomal peptide synthetase; part of the inp gene cluster that mediates the biosynthesis of fellutamide B, a mycotoxin that acts as a proteasome inhibitor. In the first step of fellutabmide B biosynthesis, inpC activates 3-hydroxydodecanoic acid to generate 3-hydroxydodecanoyl-AMP that is then loaded onto the T0 domain of inpB. The 3-hydroxydodecanoyl-S-phosphopantetheinyl-T0 is sequentially extended with L-Asn and L-Gln by the two CAT modules of inpB. The linear lipodipeptide from inpB is then transferred onto inpA for the addition of the third amino acid, L-Leu. Reductive releasing of the lipotripeptide by the TE domain of inpA produces (2S)-fellutamide B. InpF might be involved in the release and transfer of the lipodipeptide from inpB to inpA. The inp cluster-encoded proteasome subunit inpE confers resistance to internally produced fellutamides. The MFS efflux transporter inpD may contribute to fellutamide resistance as well. The polypeptide is Nonribosomal peptide synthetase inpA (Emericella nidulans (strain FGSC A4 / ATCC 38163 / CBS 112.46 / NRRL 194 / M139) (Aspergillus nidulans)).